A 105-amino-acid chain; its full sequence is Large ribosomal subunit protein eL36 (105 aa).

An N6-acetyllysine modification is found at Lys62.

The protein belongs to the eukaryotic ribosomal protein eL36 family. As to quaternary structure, component of the large ribosomal subunit.

It localises to the cytoplasm. The protein localises to the cytosol. Functionally, component of the large ribosomal subunit. The ribosome is a large ribonucleoprotein complex responsible for the synthesis of proteins in the cell. This chain is Large ribosomal subunit protein eL36 (Rpl36), found in Rattus norvegicus (Rat).